The sequence spans 552 residues: Putative E3 ubiquitin-protein ligase ARI6 (552 aa).

The segment at 129–343 (REFTCGICFE…GGYYACNRYE (215 aa)) is TRIAD supradomain. The Zn(2+) site is built by C133, C136, C150, H152, C155, C158, C178, C183, C222, C227, C245, C247, C252, C255, H260, C265, C292, and C295. An RING-type 1 zinc finger spans residues 133 to 183 (CGICFESYPLEETISVSCGHPFCATCWTGYISTSINDGPGCLMLKCPYPCC). An IBR-type zinc finger spans residues 202 to 265 (ERYYRYFLRS…SEEAHRPVDC (64 aa)). An RING-type 2; atypical zinc finger spans residues 292–322 (CPKCKRPIEKNHGCMHMTCTPPCKFEFCWLC). Residue C305 is part of the active site. The Zn(2+) site is built by C310, C314, C319, C322, H329, and C339. The disordered stretch occupies residues 518-552 (HAASSKPANCKPSSNTKDGGKGKKEALTMAGSAET). A compositionally biased stretch (polar residues) spans 519 to 534 (AASSKPANCKPSSNTK).

The protein belongs to the RBR family. Ariadne subfamily. The cofactor is Zn(2+).

The catalysed reaction is [E2 ubiquitin-conjugating enzyme]-S-ubiquitinyl-L-cysteine + [acceptor protein]-L-lysine = [E2 ubiquitin-conjugating enzyme]-L-cysteine + [acceptor protein]-N(6)-ubiquitinyl-L-lysine.. The protein operates within protein modification; protein ubiquitination. Its function is as follows. Might act as an E3 ubiquitin-protein ligase, or as part of E3 complex, which accepts ubiquitin from specific E2 ubiquitin-conjugating enzymes and then transfers it to substrates. The sequence is that of Putative E3 ubiquitin-protein ligase ARI6 (ARI6) from Arabidopsis thaliana (Mouse-ear cress).